The following is a 2036-amino-acid chain: Proline-rich protein 12 (2036 aa).

3 disordered regions span residues 210 to 283 (GGGV…RALP), 331 to 587 (CSPL…GAPG), and 649 to 697 (APSP…DPQR). Positions 223-240 (QTPPYRPGPPDPPPPPRH) are enriched in pro residues. Positions 249-258 (ASSSAAAAAA) are enriched in low complexity. Phosphoserine occurs at positions 332 and 340. Residues 340–365 (SPGAGEPSKAGPSGATAGASGRATGP) are compositionally biased toward low complexity. Gly residues-rich tracts occupy residues 367 to 380 (AAGGGGAGGGGGGY) and 391 to 400 (TGKGGYGAAA). Composition is skewed to low complexity over residues 411 to 432 (STATPKCQSLGGPAAAYATGKA) and 441 to 458 (QAYSPGQPQGLLGPQAYG). Over residues 479 to 490 (PPQPPSGPPPPG) the composition is skewed to pro residues. 2 stretches are compositionally biased toward polar residues: residues 493–504 (TCQSYSPDQLQG) and 523–537 (GLPTASPSLSYSTGH). The segment covering 543–558 (GHGGGWGPSSLGGGGE) has biased composition (gly residues). Position 651 is a phosphoserine (S651). Over residues 673 to 683 (GLGGSGGAGGP) the composition is skewed to gly residues. Residue T738 is modified to Phosphothreonine. 4 disordered regions span residues 758–850 (AFLQ…PLQL), 859–878 (LEPAAPSPRLRPEESLDPPG), 886–925 (ALEPLPPAPGDTGVGPPNSEGKDPAGAYRSPSPQGTKAPR), and 952–1068 (EMFG…CSTK). Low complexity predominate over residues 802 to 817 (LPSVLSHAPSPSPSAS). A compositionally biased stretch (pro residues) spans 833–847 (PQPPPPPPPPPPPMP). The residue at position 865 (S865) is a Phosphoserine. Residues 1037-1052 (AAPPPPPPPPPPPAPA) are compositionally biased toward pro residues. Residues S1077 and S1135 each carry the phosphoserine modification. Disordered stretches follow at residues 1120–1260 (RLPD…SLTR), 1294–1347 (RHPP…GGAL), 1376–1573 (TLPS…GEGI), and 1668–1840 (HRPP…PGRL). Residues 1182–1194 (PTTAGPASASTPT) are compositionally biased toward low complexity. Positions 1199–1208 (KPRGRGRGRG) are enriched in basic residues. The span at 1209-1223 (RKAEEAGGTRLEPLK) shows a compositional bias: basic and acidic residues. K1223 is modified (N6-acetyllysine). Residues 1239 to 1257 (GTSSGDAISGTDHNSLDSS) are compositionally biased toward polar residues. At T1304 the chain carries Phosphothreonine. Pro residues-rich tracts occupy residues 1306 to 1317 (PLSPPKSVPPSV) and 1324 to 1338 (PQPPATPAVPHPPPS). The residue at position 1308 (S1308) is a Phosphoserine. Residues S1381, S1382, and S1387 each carry the phosphoserine modification. 2 stretches are compositionally biased toward pro residues: residues 1420-1438 (DGPPLAPAAAVPGPPPLPG) and 1458-1535 (PPTP…APSP). A compositionally biased stretch (basic and acidic residues) spans 1541–1553 (PDTRPLHLAKKQE). T1561 carries the phosphothreonine modification. At S1568 the chain carries Phosphoserine. Positions 1691–1703 (APPPKAPAPPPKP) are enriched in pro residues. Basic and acidic residues-rich tracts occupy residues 1704-1715 (ETPEKTTSEKPP) and 1737-1769 (PVEKEKEKEKVTRGERPLRGERATSGRQTRPER). Position 1705 is a phosphothreonine (T1705). Low complexity predominate over residues 1817 to 1829 (GSSSDSESSPGAP). Position 1925 is a phosphoserine (S1925).

Its subcellular location is the nucleus. The protein localises to the postsynaptic density. It localises to the synapse. The protein resides in the synaptosome. The sequence is that of Proline-rich protein 12 from Homo sapiens (Human).